Reading from the N-terminus, the 141-residue chain is HTH-type transcriptional repressor NsrR (141 aa).

Residues 2 to 129 (QLTSFTDYGL…DNYTLADLVE (128 aa)) enclose the HTH rrf2-type domain. The segment at residues 28 to 51 (ISEVTDVYGVSRNHMVKIINQLSR) is a DNA-binding region (H-T-H motif). Residues cysteine 91, cysteine 96, and cysteine 102 each contribute to the [2Fe-2S] cluster site.

It depends on [2Fe-2S] cluster as a cofactor.

Nitric oxide-sensitive repressor of genes involved in protecting the cell against nitrosative stress. May require iron for activity. This is HTH-type transcriptional repressor NsrR from Escherichia coli O139:H28 (strain E24377A / ETEC).